A 44-amino-acid chain; its full sequence is DNA-directed RNA polymerase subunit Rpo12 (44 aa).

Residues Cys-8, Cys-22, and Cys-25 each contribute to the Zn(2+) site.

The protein belongs to the archaeal Rpo12/eukaryotic RPC10 RNA polymerase subunit family. In terms of assembly, part of the RNA polymerase complex. The cofactor is Zn(2+).

The protein localises to the cytoplasm. The catalysed reaction is RNA(n) + a ribonucleoside 5'-triphosphate = RNA(n+1) + diphosphate. Functionally, DNA-dependent RNA polymerase (RNAP) catalyzes the transcription of DNA into RNA using the four ribonucleoside triphosphates as substrates. This is DNA-directed RNA polymerase subunit Rpo12 from Natronomonas pharaonis (strain ATCC 35678 / DSM 2160 / CIP 103997 / JCM 8858 / NBRC 14720 / NCIMB 2260 / Gabara) (Halobacterium pharaonis).